A 569-amino-acid polypeptide reads, in one-letter code: Ribonuclease J (569 aa).

6 residues coordinate Zn(2+): histidine 81, histidine 83, aspartate 85, histidine 86, histidine 150, and aspartate 172. 373 to 377 (HASGH) serves as a coordination point for substrate. Histidine 399 serves as a coordination point for Zn(2+).

The protein belongs to the metallo-beta-lactamase superfamily. RNA-metabolizing metallo-beta-lactamase-like family. Bacterial RNase J subfamily. As to quaternary structure, homodimer, may be a subunit of the RNA degradosome. Zn(2+) serves as cofactor.

The protein localises to the cytoplasm. Its function is as follows. An RNase that has 5'-3' exonuclease and possibly endoonuclease activity. Involved in maturation of rRNA and in some organisms also mRNA maturation and/or decay. This Mycoplasma genitalium (strain ATCC 33530 / DSM 19775 / NCTC 10195 / G37) (Mycoplasmoides genitalium) protein is Ribonuclease J.